Consider the following 692-residue polypeptide: Mitogen-activated protein kinase kinase kinase 7-interacting protein 3 homolog (692 aa).

The 44-residue stretch at 8–51 folds into the CUE domain; it reads LDIQVLNDLQQRFPEIPRDVVSQCMLQNNSNLDACYRALTQESC. Disordered regions lie at residues 138 to 159, 206 to 333, and 349 to 427; these read NDQN…GVGT, YGTP…PYGP, and SQQR…VVMS. 3 stretches are compositionally biased toward polar residues: residues 215–230, 249–298, and 349–387; these read PSQN…NTAW, QSFQ…QTSH, and SQQR…SGSP. Positions 409-422 are enriched in low complexity; sequence SQPPTTTGSPTPSS. Positions 496-580 form a coiled coil; that stretch reads ALLLHQRARM…QKEIDLLQSR (85 aa). The segment at 598–662 is disordered; that stretch reads SPGPAVPPNT…SPRPGRDEDF (65 aa). Over residues 608–620 the composition is skewed to basic and acidic residues; it reads CKKESSETTSGER. The RanBP2-type zinc finger occupies 662-692; that stretch reads FEGSPWNCNSCTFLNHPALNRCEQCEMPRFT.

Functionally, may play a role in signaling pathway. In Xenopus laevis (African clawed frog), this protein is Mitogen-activated protein kinase kinase kinase 7-interacting protein 3 homolog (map3k7ip3).